Consider the following 382-residue polypeptide: Carbamoyl phosphate synthase small chain (382 aa).

The segment at 1–189 is CPSase; that stretch reads MIKSALLVLE…GLPEAKSEDD (189 aa). The L-glutamine site is built by Ser47, Gly241, and Gly243. One can recognise a Glutamine amidotransferase type-1 domain in the interval 193–380; that stretch reads HVVAYDFGAK…IELIEQYRQS (188 aa). Cys269 functions as the Nucleophile in the catalytic mechanism. Leu270, Gln273, Asn311, Gly313, and Phe314 together coordinate L-glutamine. Catalysis depends on residues His353 and Glu355.

It belongs to the CarA family. As to quaternary structure, composed of two chains; the small (or glutamine) chain promotes the hydrolysis of glutamine to ammonia, which is used by the large (or ammonia) chain to synthesize carbamoyl phosphate. Tetramer of heterodimers (alpha,beta)4.

The enzyme catalyses hydrogencarbonate + L-glutamine + 2 ATP + H2O = carbamoyl phosphate + L-glutamate + 2 ADP + phosphate + 2 H(+). The catalysed reaction is L-glutamine + H2O = L-glutamate + NH4(+). The protein operates within amino-acid biosynthesis; L-arginine biosynthesis; carbamoyl phosphate from bicarbonate: step 1/1. It functions in the pathway pyrimidine metabolism; UMP biosynthesis via de novo pathway; (S)-dihydroorotate from bicarbonate: step 1/3. Small subunit of the glutamine-dependent carbamoyl phosphate synthetase (CPSase). CPSase catalyzes the formation of carbamoyl phosphate from the ammonia moiety of glutamine, carbonate, and phosphate donated by ATP, constituting the first step of 2 biosynthetic pathways, one leading to arginine and/or urea and the other to pyrimidine nucleotides. The small subunit (glutamine amidotransferase) binds and cleaves glutamine to supply the large subunit with the substrate ammonia. This is Carbamoyl phosphate synthase small chain from Salmonella typhimurium (strain LT2 / SGSC1412 / ATCC 700720).